The primary structure comprises 68 residues: Conotoxin Cal12.1p1 (68 aa).

Residues 1–23 (DLITNSYTRGKPRHVTSWRNLRT) constitute a propeptide that is removed on maturation.

In terms of processing, contains 4 disulfide bonds. Expressed by the venom duct.

The protein resides in the secreted. This Californiconus californicus (California cone) protein is Conotoxin Cal12.1p1.